Reading from the N-terminus, the 324-residue chain is Ribosomal RNA small subunit methyltransferase H (324 aa).

S-adenosyl-L-methionine is bound by residues 41–43 (GGH), D60, Y87, D111, and Q118.

The protein belongs to the methyltransferase superfamily. RsmH family.

Its subcellular location is the cytoplasm. It carries out the reaction cytidine(1402) in 16S rRNA + S-adenosyl-L-methionine = N(4)-methylcytidine(1402) in 16S rRNA + S-adenosyl-L-homocysteine + H(+). Its function is as follows. Specifically methylates the N4 position of cytidine in position 1402 (C1402) of 16S rRNA. The sequence is that of Ribosomal RNA small subunit methyltransferase H from Nocardia farcinica (strain IFM 10152).